The chain runs to 253 residues: Demethylmenaquinone methyltransferase (253 aa).

S-adenosyl-L-methionine contacts are provided by residues threonine 62, aspartate 80, 102–103 (DA), and serine 119.

Belongs to the class I-like SAM-binding methyltransferase superfamily. MenG/UbiE family.

It catalyses the reaction a 2-demethylmenaquinol + S-adenosyl-L-methionine = a menaquinol + S-adenosyl-L-homocysteine + H(+). Its pathway is quinol/quinone metabolism; menaquinone biosynthesis; menaquinol from 1,4-dihydroxy-2-naphthoate: step 2/2. In terms of biological role, methyltransferase required for the conversion of demethylmenaquinol (DMKH2) to menaquinol (MKH2). This Paenarthrobacter aurescens (strain TC1) protein is Demethylmenaquinone methyltransferase.